The sequence spans 354 residues: Protein angel (354 aa).

The tract at residues 22-59 is disordered; it reads VSSQAKGASGKRKQKAKEMESSHDRNRRWTSLGNQAEG.

It belongs to the CCR4/nocturin family. As to expression, ubiquitously expressed in embryos.

The protein is Protein angel (angel) of Drosophila melanogaster (Fruit fly).